An 86-amino-acid polypeptide reads, in one-letter code: UPF0457 protein BCE33L2265 (86 aa).

The protein belongs to the UPF0457 family.

In Bacillus cereus (strain ZK / E33L), this protein is UPF0457 protein BCE33L2265.